The following is an 858-amino-acid chain: Bifunctional uridylyltransferase/uridylyl-removing enzyme (858 aa).

A uridylyltransferase region spans residues 1 to 324 (MSAHAAPSPE…PATSGITRVL (324 aa)). Positions 325–681 (SADRFVEKQG…ARPSPIGDAL (357 aa)) are uridylyl-removing. The region spanning 443–565 (VDQHILMVLR…VGNERYLTAL (123 aa)) is the HD domain. 2 ACT domains span residues 682-763 (QVLV…PSKG) and 790-858 (ILSV…AIAV).

This sequence belongs to the GlnD family. The cofactor is Mg(2+).

The enzyme catalyses [protein-PII]-L-tyrosine + UTP = [protein-PII]-uridylyl-L-tyrosine + diphosphate. The catalysed reaction is [protein-PII]-uridylyl-L-tyrosine + H2O = [protein-PII]-L-tyrosine + UMP + H(+). Its activity is regulated as follows. Uridylyltransferase (UTase) activity is inhibited by glutamine, while glutamine activates uridylyl-removing (UR) activity. Functionally, modifies, by uridylylation and deuridylylation, the PII regulatory proteins (GlnB and homologs), in response to the nitrogen status of the cell that GlnD senses through the glutamine level. Under low glutamine levels, catalyzes the conversion of the PII proteins and UTP to PII-UMP and PPi, while under higher glutamine levels, GlnD hydrolyzes PII-UMP to PII and UMP (deuridylylation). Thus, controls uridylylation state and activity of the PII proteins, and plays an important role in the regulation of nitrogen assimilation and metabolism. This is Bifunctional uridylyltransferase/uridylyl-removing enzyme from Burkholderia orbicola (strain AU 1054).